A 1036-amino-acid chain; its full sequence is Ubiquitin carboxyl-terminal hydrolase 48 (1036 aa).

The USP domain maps to 89–421 (VGLTNLGASC…NAYMLVYRLQ (333 aa)). Catalysis depends on cysteine 98, which acts as the Nucleophile. Residue histidine 353 is the Proton acceptor of the active site. DUSP domains are found at residues 460-554 (QSVD…KALC), 569-692 (NQLN…YKEC), and 712-825 (MIAK…RIEV). Positions 611–644 (DEQDGEAEQSNGKINGSPFSKDESKEEKKEEEEE) are disordered. Residues 618-628 (EQSNGKINGSP) show a composition bias toward polar residues. The disordered stretch occupies residues 881–924 (APELNVSSSETEEDKEEAKPDGEKDPDFNQSNGGTKRQKTSQQG). Phosphoserine is present on residues serine 887, serine 888, and serine 889. The span at 896-907 (EEAKPDGEKDPD) shows a compositional bias: basic and acidic residues. A compositionally biased stretch (polar residues) spans 908 to 924 (FNQSNGGTKRQKTSQQG). The region spanning 930–1010 (KQVIRRSTRH…ILLKADEPIA (81 aa)) is the Ubiquitin-like domain. Lysine 957 is modified (N6-acetyllysine).

Belongs to the peptidase C19 family. In terms of assembly, interacts with TRAF2 and RELA. Interacts with GPS1. In terms of tissue distribution, present in the brain, in particular in the postsynaptic density and the dendritic lipid raft fractions (at protein level).

The protein resides in the cytoplasm. The protein localises to the nucleus. Its subcellular location is the cell projection. It localises to the cilium. It catalyses the reaction Thiol-dependent hydrolysis of ester, thioester, amide, peptide and isopeptide bonds formed by the C-terminal Gly of ubiquitin (a 76-residue protein attached to proteins as an intracellular targeting signal).. Its function is as follows. Deubiquitinase that recognizes and hydrolyzes the peptide bond at the C-terminal Gly of ubiquitin. Involved in the processing of polyubiquitin precursors as well as that of ubiquitinated proteins. Plays a role in the regulation of NF-kappa-B activation by TNF receptor superfamily via its interactions with RELA and TRAF2. May also play a regulatory role at postsynaptic sites. Plays an important role in cell cycle progression by deubiquitinating Aurora B/AURKB and thereby extending its stability. In the context of H. pylori infection, stabilizes nuclear RELA through deubiquitination, thereby promoting the transcriptional activity of RELA to prolong TNFAIP3 de novo synthesis. Consequently, TNFAIP3 suppresses caspase activity and apoptotic cell death. Also functions in the modulation of the ciliary and synaptic transport as well as cytoskeleton organization, which are key for photoreceptor function and homeostasis. To achieve this, stabilizes the levels of the retinal degeneration-associated proteins ARL3 and UNC119 using distinct mechanisms. Plays a positive role in pyroptosis by stabilizing gasdermin E/GSDME through removal of its 'Lys-48'-linked ubiquitination. In Rattus norvegicus (Rat), this protein is Ubiquitin carboxyl-terminal hydrolase 48 (Usp48).